The following is a 591-amino-acid chain: Aspartate--tRNA(Asp/Asn) ligase (591 aa).

E174 contributes to the L-aspartate binding site. The interval 198 to 201 (QLFK) is aspartate. R220 is an L-aspartate binding site. ATP-binding positions include 220–222 (RDE) and Q229. Position 450 (H450) interacts with L-aspartate. ATP is bound at residue E483. Position 490 (R490) interacts with L-aspartate. 535–538 (GLDR) lines the ATP pocket.

This sequence belongs to the class-II aminoacyl-tRNA synthetase family. Type 1 subfamily. In terms of assembly, homodimer.

Its subcellular location is the cytoplasm. It carries out the reaction tRNA(Asx) + L-aspartate + ATP = L-aspartyl-tRNA(Asx) + AMP + diphosphate. Aspartyl-tRNA synthetase with relaxed tRNA specificity since it is able to aspartylate not only its cognate tRNA(Asp) but also tRNA(Asn). Reaction proceeds in two steps: L-aspartate is first activated by ATP to form Asp-AMP and then transferred to the acceptor end of tRNA(Asp/Asn). This Pseudomonas fluorescens (strain Pf0-1) protein is Aspartate--tRNA(Asp/Asn) ligase.